The primary structure comprises 1026 residues: Multidrug resistance protein MdtC (1026 aa).

11 helical membrane passes run 16–36 (LLAL…PVAP), 333–353 (EVEQ…FLFL), 360–380 (LIPA…IYLC), 387–407 (LSLM…IVVL), 435–455 (VFSI…MGGI), 459–479 (LFHE…LIAL), 528–548 (WVLL…ISIP), 853–873 (LLLI…LYES), 897–917 (LFNA…IGLV), 953–973 (PILM…FSYG), and 984–1004 (ITIV…TPVV).

The protein belongs to the resistance-nodulation-cell division (RND) (TC 2.A.6) family. MdtC subfamily. In terms of assembly, part of a tripartite efflux system composed of MdtA, MdtB and MdtC. MdtC forms a heteromultimer with MdtB.

The protein localises to the cell inner membrane. The protein is Multidrug resistance protein MdtC of Edwardsiella ictaluri (strain 93-146).